Reading from the N-terminus, the 1029-residue chain is Tyrosine-protein kinase-like otk (1029 aa).

An N-terminal signal peptide occupies residues 1 to 18 (MISIYGLVMALMMASVLA). Over 19 to 577 (SSSRFQRVPQ…GGDGFLVTRA (559 aa)) the chain is Extracellular. Ig-like C2-type domains are found at residues 21-104 (SRFQ…REAS), 105-195 (PPAK…RVMS), 247-361 (PEDL…APIS), 364-459 (PGIL…VAIN), and 464-554 (PKFS…VQLV). The N-linked (GlcNAc...) asparagine glycan is linked to N35. 4 disulfide bridges follow: C42–C91, C133–C184, C272–C350, and C395–C443. Residues N332, N413, N425, N440, N453, N508, and N520 are each glycosylated (N-linked (GlcNAc...) asparagine). Cysteines 486 and 538 form a disulfide. Residues 578-598 (VLITMTVALAYIVLVVGLMLW) traverse the membrane as a helical segment. At 599–1029 (CRYRRQARKA…LSKAMQIAEK (431 aa)) the chain is on the cytoplasmic side. Disordered stretches follow at residues 613–675 (LSTK…KKSA) and 714–756 (SPSD…KTSM). Over residues 651–669 (KSSGDAQKSDDTACSQQSR) the composition is skewed to polar residues. S674 is subject to Phosphoserine. The Protein kinase; inactive domain maps to 688 to 1024 (LSELIQIGRG…QLGAALSKAM (337 aa)). Residues 716–727 (SDKDADTEKQHS) are compositionally biased toward basic and acidic residues.

The protein belongs to the protein kinase superfamily. Tyr protein kinase family. Insulin receptor subfamily. In terms of assembly, interacts with plexA; component of a receptor complex that mediates the repulsive signaling in response to Semaphorin ligands.

It localises to the cell membrane. Its function is as follows. Acts as a calcium-dependent, homophilic cell adhesion molecule that regulates neural recognition during the development of the nervous system. Component of the repulsive Plexin signaling response to regulate motor axon guidance at the embryonic stage. Also component of a receptor complex that is required in the adult visual system to innervate the lamina layer; specific targeting of R1-R6 axons. The protein is Tyrosine-protein kinase-like otk of Drosophila sechellia (Fruit fly).